We begin with the raw amino-acid sequence, 1715 residues long: Rho guanine nucleotide exchange factor TIAM2 (1715 aa).

2 stretches are compositionally biased toward polar residues: residues 1-22 and 218-229; these read MGNS…TVTG and GSPSSQRPSPTD. Disordered stretches follow at residues 1 to 27, 174 to 249, 263 to 294, and 385 to 418; these read MGNS…KQKP, FHNG…WYDS, SFLA…SSLS, and TGSL…NAEG. The N-myristoyl glycine moiety is linked to residue glycine 2. Low complexity predominate over residues 235-245; the sequence is SKGSSLSSESS. Residues 395 to 411 are compositionally biased toward basic and acidic residues; it reads LQEPRSMEGSEYFDSHS. Residues 504 to 618 form the PH 1 domain; it reads VVRKAGWLFF…WVTAIHSACA (115 aa). Residues 665 to 692 are a coiled coil; sequence PKNRKAIENQIRQWEQNLEKFHMDLFRM. One can recognise an RBD domain in the interval 831–902; the sequence is VQTYVHFQDN…YMQEQVYDEI (72 aa). The region spanning 911–997 is the PDZ domain; the sequence is DVQLTKTGDM…GLTLVARPVT (87 aa). The interval 1092 to 1113 is disordered; the sequence is THTNSMEAPTESHDPPPRPLAR. In terms of domain architecture, DH spans 1120–1314; it reads RLRKVIQELV…EKVASHINEM (195 aa). A PH 2 domain is found at 1347–1478; the sequence is LLMHSTVSWL…KVIRSILREN (132 aa). The segment at 1515 to 1582 is disordered; sequence SLKGLRTSSS…EGLAEFPDGL (68 aa). Low complexity predominate over residues 1522-1532; the sequence is SSSSEWPSEPS. Residues 1533-1552 are compositionally biased toward polar residues; sequence KGNSLDSDECSLSSGTQSSG. The segment covering 1557-1572 has biased composition (basic and acidic residues); it reads ESRRDSKSTELEKDAQ. Serine 1604 carries the phosphoserine modification. Threonine 1662 is modified (phosphothreonine).

Belongs to the TIAM family. In terms of assembly, interacts with MAP1A, MAP1B, PARP1 and YWHAE. Interacts with CD44, PARD3 and MAPK8IP2. Post-translationally, phosphorylated on serine and threonine residues. Phosphorylated on Thr-1662 by Rho-kinase. Its phosphorylation by Rho-kinase inhibits its guanine nucleotide exchange activity, its interaction with MAP1A, MAP1B, PARP1 and YWHAE and reduces its ability to promote neurite growth. As to expression, expressed in fetal brain (at protein level). Expressed in the olfactory bulb, cortical plate of the cerebral cortex, caudate putamen, hippocampus, ependymal cells of the lateral surface of the lateral ventricles of the brain. Weakly expressed in heart, lung, liver, skeletal muscle, kidney and testis.

It localises to the cytoplasm. The protein localises to the cell projection. The protein resides in the lamellipodium. It is found in the filopodium. Its subcellular location is the growth cone. It localises to the neuron projection. The protein localises to the perikaryon. Its function is as follows. Modulates the activity of RHO-like proteins and connects extracellular signals to cytoskeletal activities. Acts as a GDP-dissociation stimulator protein that stimulates the GDP-GTP exchange activity of RHO-like GTPases and activates them. Activates specifically RAC1, but not CDC42 and RHOA. Mediates extracellular laminin signals to activate Rac1, contributing to neurite growth. Involved in lamellipodial formation and advancement of the growth cone of embryonic hippocampal neurons. Promotes migration of neurons in the cerebral cortex. When overexpressed, induces membrane ruffling accompanied by the accumulation of actin filaments along the altered plasma membrane. The protein is Rho guanine nucleotide exchange factor TIAM2 of Mus musculus (Mouse).